Consider the following 1120-residue polypeptide: Transcription-repair-coupling factor (1120 aa).

The 166-residue stretch at 591-756 (DLTNGMLMDR…MTGLKELSII (166 aa)) folds into the Helicase ATP-binding domain. 604–611 (GDVGFGKT) serves as a coordination point for ATP. A DEEQ box motif is present at residues 709–712 (DEEQ). Residues 777–933 (IIRDALLREH…TIASHDADLR (157 aa)) form the Helicase C-terminal domain.

In the N-terminal section; belongs to the UvrB family. This sequence in the C-terminal section; belongs to the helicase family. RecG subfamily.

It is found in the cytoplasm. Its function is as follows. Couples transcription and DNA repair by recognizing RNA polymerase (RNAP) stalled at DNA lesions. Mediates ATP-dependent release of RNAP and its truncated transcript from the DNA, and recruitment of nucleotide excision repair machinery to the damaged site. The sequence is that of Transcription-repair-coupling factor from Rickettsia prowazekii (strain Madrid E).